The chain runs to 406 residues: 26S proteasome regulatory subunit 8 (406 aa).

Ala2 is modified (N-acetylalanine). Ser120 is subject to Phosphoserine. Residues 186 to 406 form a may mediate interaction with PRPF9 region; it reads VLLYGPPGTG…KNMSIKKLWK (221 aa). 190–197 serves as a coordination point for ATP; sequence GPPGTGKT. N6-acetyllysine is present on Lys222.

It belongs to the AAA ATPase family. Component of the 19S proteasome regulatory particle complex. The 26S proteasome consists of a 20S core particle (CP) and two 19S regulatory subunits (RP). The regulatory particle is made of a lid composed of 9 subunits, a base containing 6 ATPases including PSMC5 and few additional components. Component of a complex with USP49 and RUVBL1. Interacts with PRPF19. Interacts with TRIM5. Interacts with NDC80. Interacts with PAAF1. Interacts, in vitro, with the thyroid hormone receptor (in a thyroid hormone T3-dependent manner) and with retinoid X receptor (RXR). Interacts with ERCC6.

The protein localises to the cytoplasm. Its subcellular location is the nucleus. Component of the 26S proteasome, a multiprotein complex involved in the ATP-dependent degradation of ubiquitinated proteins. This complex plays a key role in the maintenance of protein homeostasis by removing misfolded or damaged proteins, which could impair cellular functions, and by removing proteins whose functions are no longer required. Therefore, the proteasome participates in numerous cellular processes, including cell cycle progression, apoptosis, or DNA damage repair. PSMC5 belongs to the heterohexameric ring of AAA (ATPases associated with diverse cellular activities) proteins that unfolds ubiquitinated target proteins that are concurrently translocated into a proteolytic chamber and degraded into peptides. This chain is 26S proteasome regulatory subunit 8 (PSMC5), found in Bos taurus (Bovine).